The sequence spans 481 residues: MQITRDKWSKNFSEWFDWVLREGEFYDYGRYPVKGMGVWMPYGFKLRQNIISIIRNLLDSTGHEEVLFPLLIPEDLLRRESTHIKGFEEEVFWVTKGGSEDLDVKLALRPTSEVAITTMENLWLKSYKQLPKKYYQIVSVFRYETKATRPMIRLREITTFKEAHTVHETYDDAQRQVEEAIEIYKKIFNNLAIPYVLSERPEWDRFAGALHTYAFDTIMPDGKVMQIGTVHHLGQNFSRALDFKIQKKDGSLDYPHQTSYGISDRAIASVIAIHGDDHGPILPPSVAPIKVVVVPIPAKNEEGTQQVMKYSIEICEMLNKNNITCVTDQDTEKTPGEKFYIWEIKGVPIRLEIGPRELASSTVFIKRRDNLKSYTVKKEEVVNKVKEVLNEIQEDLRKRAWESLKSRIEYANDIEKAKNILENNSGIVDVPWCGSKECGLKIEELTNARVLGYPIEDRKVNDKCVICKMNAKTVLRVAKTY.

Belongs to the class-II aminoacyl-tRNA synthetase family. ProS type 3 subfamily. In terms of assembly, homodimer.

It localises to the cytoplasm. The catalysed reaction is tRNA(Pro) + L-proline + ATP = L-prolyl-tRNA(Pro) + AMP + diphosphate. In terms of biological role, catalyzes the attachment of proline to tRNA(Pro) in a two-step reaction: proline is first activated by ATP to form Pro-AMP and then transferred to the acceptor end of tRNA(Pro). This chain is Proline--tRNA ligase, found in Saccharolobus islandicus (strain Y.N.15.51 / Yellowstone #2) (Sulfolobus islandicus).